Reading from the N-terminus, the 234-residue chain is Transcription factor UDT1 (234 aa).

The segment at 1-51 (MPRRARARGGGGGGGEEVKVEDDFIDSVLNFGGGGGGEEDGDDGEEEQQQQ) is disordered. The span at 37–48 (GEEDGDDGEEEQ) shows a compositional bias: acidic residues. The interval 61–74 (EFKSKNLEAERRRR) is basic motif; degenerate. Residues 61–110 (EFKSKNLEAERRRRGRLNGNIFALRAVVPKITKMSKEATLSDAIEHIKNL) enclose the bHLH domain. The helix-loop-helix motif stretch occupies residues 75–110 (GRLNGNIFALRAVVPKITKMSKEATLSDAIEHIKNL).

It belongs to the bHLH protein family.

The protein resides in the nucleus. In terms of biological role, transcription factor that plays a crucial role in tapetum development. Required for male fertility and pollen differentiation within the developing anther. Plays a major role in maintaining tapetum development, starting in early meiosis. Required for pollen mother cell meiosis. May regulate the anther-specific cysteine protease CP1 and lipid-transfer proteins C4 and C6. Required for anther development. Functions in parallel with GAMYB to regulate early anther development. Functions upstream of the transcription factor TDR and may positively regulate its transcription. The chain is Transcription factor UDT1 from Oryza sativa subsp. japonica (Rice).